Here is a 561-residue protein sequence, read N- to C-terminus: Dihydroxy-acid dehydratase (561 aa).

Cys51 serves as a coordination point for [2Fe-2S] cluster. Asp83 contributes to the Mg(2+) binding site. Cys124 provides a ligand contact to [2Fe-2S] cluster. The Mg(2+) site is built by Asp125 and Lys126. Lys126 carries the N6-carboxylysine modification. [2Fe-2S] cluster is bound at residue Cys196. Glu447 is a binding site for Mg(2+). Ser473 serves as the catalytic Proton acceptor.

It belongs to the IlvD/Edd family. Homodimer. Requires [2Fe-2S] cluster as cofactor. The cofactor is Mg(2+).

The catalysed reaction is (2R)-2,3-dihydroxy-3-methylbutanoate = 3-methyl-2-oxobutanoate + H2O. It catalyses the reaction (2R,3R)-2,3-dihydroxy-3-methylpentanoate = (S)-3-methyl-2-oxopentanoate + H2O. Its pathway is amino-acid biosynthesis; L-isoleucine biosynthesis; L-isoleucine from 2-oxobutanoate: step 3/4. The protein operates within amino-acid biosynthesis; L-valine biosynthesis; L-valine from pyruvate: step 3/4. Functions in the biosynthesis of branched-chain amino acids. Catalyzes the dehydration of (2R,3R)-2,3-dihydroxy-3-methylpentanoate (2,3-dihydroxy-3-methylvalerate) into 2-oxo-3-methylpentanoate (2-oxo-3-methylvalerate) and of (2R)-2,3-dihydroxy-3-methylbutanoate (2,3-dihydroxyisovalerate) into 2-oxo-3-methylbutanoate (2-oxoisovalerate), the penultimate precursor to L-isoleucine and L-valine, respectively. The protein is Dihydroxy-acid dehydratase of Oceanobacillus iheyensis (strain DSM 14371 / CIP 107618 / JCM 11309 / KCTC 3954 / HTE831).